Here is a 123-residue protein sequence, read N- to C-terminus: Small ribosomal subunit protein uS12 (123 aa).

D89 bears the 3-methylthioaspartic acid mark.

Belongs to the universal ribosomal protein uS12 family. As to quaternary structure, part of the 30S ribosomal subunit. Contacts proteins S8 and S17. May interact with IF1 in the 30S initiation complex.

Functionally, with S4 and S5 plays an important role in translational accuracy. Its function is as follows. Interacts with and stabilizes bases of the 16S rRNA that are involved in tRNA selection in the A site and with the mRNA backbone. Located at the interface of the 30S and 50S subunits, it traverses the body of the 30S subunit contacting proteins on the other side and probably holding the rRNA structure together. The combined cluster of proteins S8, S12 and S17 appears to hold together the shoulder and platform of the 30S subunit. The protein is Small ribosomal subunit protein uS12 of Orientia tsutsugamushi (strain Ikeda) (Rickettsia tsutsugamushi).